Here is a 122-residue protein sequence, read N- to C-terminus: uncharacterized protein (122 aa).

This is an uncharacterized protein from Escherichia coli (strain K12).